Reading from the N-terminus, the 87-residue chain is Small ribosomal subunit protein uS17 (87 aa).

This sequence belongs to the universal ribosomal protein uS17 family. In terms of assembly, part of the 30S ribosomal subunit.

In terms of biological role, one of the primary rRNA binding proteins, it binds specifically to the 5'-end of 16S ribosomal RNA. The chain is Small ribosomal subunit protein uS17 from Alcanivorax borkumensis (strain ATCC 700651 / DSM 11573 / NCIMB 13689 / SK2).